Consider the following 615-residue polypeptide: 70 kDa neurofilament protein (615 aa).

A disordered region spans residues 1-31 (MSVTQKKTEISTTTTYEGESRPSSGMSGFSY). Residues 1–99 (MSVTQKKTEI…KANREREKQD (99 aa)) form a head region. Over residues 21-30 (RPSSGMSGFS) the composition is skewed to polar residues. The IF rod domain maps to 96 to 449 (EKQDMRDLNE…KLLEGEESRV (354 aa)). Residues 100–135 (MRDLNERFANYIEKVRFLEAQNKKLAGELEELKSKW) are coil 1A. The segment at 136–145 (GKETSAIKEM) is linker 1. Residues 146–284 (YETELEEARK…VHAQELKELA (139 aa)) are coil 1B. The linker 12 stretch occupies residues 285–303 (ALAYRDTTAENREFWRNEL). A coil 2 region spans residues 304 to 449 (AQAIRDIQQE…KLLEGEESRV (146 aa)). Residues 450–615 (GMKQIVEQVV…ANYTQNTVYQ (166 aa)) form a tail region. The LTD domain occupies 499-612 (AKTTYQRTSK…EDKANYTQNT (114 aa)).

It belongs to the intermediate filament family.

The sequence is that of 70 kDa neurofilament protein from Doryteuthis pealeii (Longfin inshore squid).